Consider the following 225-residue polypeptide: Probable proteasome subunit beta type-6 (225 aa).

It belongs to the peptidase T1B family. In terms of assembly, the 26S proteasome consists of a 20S proteasome core and two 19S regulatory subunits. The 20S proteasome core is composed of 28 subunits that are arranged in four stacked rings, resulting in a barrel-shaped structure. The two end rings are each formed by seven alpha subunits, and the two central rings are each formed by seven beta subunits. The catalytic chamber with the active sites is on the inside of the barrel.

The protein resides in the cytoplasm. It localises to the nucleus. Non-catalytic component of the proteasome, a multicatalytic proteinase complex which is characterized by its ability to cleave peptides with Arg, Phe, Tyr, Leu, and Glu adjacent to the leaving group at neutral or slightly basic pH. The proteasome has an ATP-dependent proteolytic activity. The polypeptide is Probable proteasome subunit beta type-6 (pam1) (Schizosaccharomyces pombe (strain 972 / ATCC 24843) (Fission yeast)).